We begin with the raw amino-acid sequence, 209 residues long: Xanthine phosphoribosyltransferase 1 (209 aa).

The residue at position 79 (Ser79) is a Phosphoserine.

The protein localises to the cytoplasm. In terms of biological role, may act as a xanthine phosphoribosyltransferase involved in the synthesis of purine nucleotides. Such activity is however unclear in vivo. The sequence is that of Xanthine phosphoribosyltransferase 1 (XPT1) from Saccharomyces cerevisiae (strain ATCC 204508 / S288c) (Baker's yeast).